The primary structure comprises 290 residues: Phosphoribosylaminoimidazole-succinocarboxamide synthase (290 aa).

It belongs to the SAICAR synthetase family.

The catalysed reaction is 5-amino-1-(5-phospho-D-ribosyl)imidazole-4-carboxylate + L-aspartate + ATP = (2S)-2-[5-amino-1-(5-phospho-beta-D-ribosyl)imidazole-4-carboxamido]succinate + ADP + phosphate + 2 H(+). It functions in the pathway purine metabolism; IMP biosynthesis via de novo pathway; 5-amino-1-(5-phospho-D-ribosyl)imidazole-4-carboxamide from 5-amino-1-(5-phospho-D-ribosyl)imidazole-4-carboxylate: step 1/2. This is Phosphoribosylaminoimidazole-succinocarboxamide synthase from Haemophilus influenzae (strain PittEE).